A 1438-amino-acid chain; its full sequence is Lysophospholipase NTE1 (1438 aa).

Residues 1 to 25 (MDSDTSSADFHSTETLVSTPKYSYG) lie on the Cytoplasmic side of the membrane. The chain crosses the membrane as a helical span at residues 26-46 (VLINVILLVSWTCFRVVNWFL). Over 47-64 (VTLPSILLGMLSKTFQIT) the chain is Lumenal. A helical transmembrane segment spans residues 65-85 (LSLSSILMFVVAVTAICFLVV). Residues 86–1438 (RYKYLTRYSR…HVSLSRRNSI (1353 aa)) are Cytoplasmic-facing. Over residues 432 to 450 (YETQTIPNESEDSPTIQRS) the composition is skewed to polar residues. The tract at residues 432-464 (YETQTIPNESEDSPTIQRSSLRRRASHSTSLRK) is disordered. A nucleoside 3',5'-cyclic phosphate-binding positions include 590-720 (GDDS…LTID) and 707-856 (RLKR…VANR). The PNPLA domain maps to 1131 to 1295 (LVLGGGGSRG…LDNLPVSEMK (165 aa)). The GXGXXG signature appears at 1135–1140 (GGGSRG). Residues 1162-1166 (GTSIG) carry the GXSXG motif. The active-site Nucleophile is Ser1164. Asp1282 (proton acceptor) is an active-site residue. Positions 1282–1284 (DGG) match the DGA/G motif.

The protein belongs to the NTE family.

It localises to the endoplasmic reticulum membrane. It carries out the reaction a 1-acyl-sn-glycero-3-phosphocholine + H2O = sn-glycerol 3-phosphocholine + a fatty acid + H(+). Its activity is regulated as follows. Inhibited by organophosphorus esters. Intracellular phospholipase B that catalyzes the double deacylation of phosphatidylcholine (PC) to glycerophosphocholine (GroPCho). Plays an important role in membrane lipid homeostasis. Responsible for the rapid PC turnover in response to inositol, elevated temperatures, or when choline is present in the growth medium. The chain is Lysophospholipase NTE1 (NTE1) from Meyerozyma guilliermondii (strain ATCC 6260 / CBS 566 / DSM 6381 / JCM 1539 / NBRC 10279 / NRRL Y-324) (Yeast).